A 144-amino-acid chain; its full sequence is 3-dehydroquinate dehydratase (144 aa).

Tyrosine 22 acts as the Proton acceptor in catalysis. 3 residues coordinate substrate: asparagine 74, histidine 80, and aspartate 87. The active-site Proton donor is the histidine 100. Residues 101–102 (LS) and arginine 111 contribute to the substrate site.

This sequence belongs to the type-II 3-dehydroquinase family. As to quaternary structure, homododecamer.

It catalyses the reaction 3-dehydroquinate = 3-dehydroshikimate + H2O. It functions in the pathway metabolic intermediate biosynthesis; chorismate biosynthesis; chorismate from D-erythrose 4-phosphate and phosphoenolpyruvate: step 3/7. Functionally, catalyzes a trans-dehydration via an enolate intermediate. In Clostridium perfringens (strain ATCC 13124 / DSM 756 / JCM 1290 / NCIMB 6125 / NCTC 8237 / Type A), this protein is 3-dehydroquinate dehydratase.